A 242-amino-acid chain; its full sequence is NAD(P)H-quinone oxidoreductase subunit K (242 aa).

[4Fe-4S] cluster is bound by residues C60, C61, C125, and C156.

This sequence belongs to the complex I 20 kDa subunit family. As to quaternary structure, NDH-1 can be composed of about 15 different subunits; different subcomplexes with different compositions have been identified which probably have different functions. The cofactor is [4Fe-4S] cluster.

The protein localises to the cellular thylakoid membrane. The enzyme catalyses a plastoquinone + NADH + (n+1) H(+)(in) = a plastoquinol + NAD(+) + n H(+)(out). The catalysed reaction is a plastoquinone + NADPH + (n+1) H(+)(in) = a plastoquinol + NADP(+) + n H(+)(out). NDH-1 shuttles electrons from an unknown electron donor, via FMN and iron-sulfur (Fe-S) centers, to quinones in the respiratory and/or the photosynthetic chain. The immediate electron acceptor for the enzyme in this species is believed to be plastoquinone. Couples the redox reaction to proton translocation, and thus conserves the redox energy in a proton gradient. Cyanobacterial NDH-1 also plays a role in inorganic carbon-concentration. In Prochlorococcus marinus (strain SARG / CCMP1375 / SS120), this protein is NAD(P)H-quinone oxidoreductase subunit K.